The chain runs to 140 residues: L-fucose mutarotase (140 aa).

Histidine 22 (proton donor) is an active-site residue. Residues aspartate 30, arginine 107, and tyrosine 129–asparagine 131 each bind substrate.

Belongs to the RbsD / FucU family. FucU mutarotase subfamily. As to quaternary structure, homodecamer.

The protein resides in the cytoplasm. The enzyme catalyses alpha-L-fucose = beta-L-fucose. It functions in the pathway carbohydrate metabolism; L-fucose metabolism. Involved in the anomeric conversion of L-fucose. The protein is L-fucose mutarotase of Citrobacter koseri (strain ATCC BAA-895 / CDC 4225-83 / SGSC4696).